We begin with the raw amino-acid sequence, 430 residues long: Adenylosuccinate synthetase (430 aa).

Residues 12–18 and 40–42 each bind GTP; these read GDEGKGK and GHT. The active-site Proton acceptor is the D13. D13 and G40 together coordinate Mg(2+). Residues 13 to 16, 38 to 41, T130, R144, Q224, T239, and R303 each bind IMP; these read DEGK and NAGH. H41 acts as the Proton donor in catalysis. 299–305 contacts substrate; sequence TVTGRKR. GTP contacts are provided by residues R305, 331 to 333, and 413 to 415; these read KLD and STS.

It belongs to the adenylosuccinate synthetase family. Homodimer. Mg(2+) is required as a cofactor.

The protein localises to the cytoplasm. The catalysed reaction is IMP + L-aspartate + GTP = N(6)-(1,2-dicarboxyethyl)-AMP + GDP + phosphate + 2 H(+). Its pathway is purine metabolism; AMP biosynthesis via de novo pathway; AMP from IMP: step 1/2. Its function is as follows. Plays an important role in the de novo pathway of purine nucleotide biosynthesis. Catalyzes the first committed step in the biosynthesis of AMP from IMP. The protein is Adenylosuccinate synthetase of Cereibacter sphaeroides (strain ATCC 17025 / ATH 2.4.3) (Rhodobacter sphaeroides).